The following is a 301-amino-acid chain: Mitochondrial substrate carrier family protein Z (301 aa).

The Mitochondrial intermembrane segment spans residues 1–19; the sequence is MTGKEENKQQQHVNFPWKR. Solcar repeat units follow at residues 14 to 101, 116 to 200, and 210 to 293; these read NFPW…FTEQ, QQFG…ISDY, and LPVW…VMGI. The chain crosses the membrane as a helical span at residues 20 to 37; that stretch reads LVAGAVAGTADVWACHPL. Residues 38–65 lie on the Mitochondrial matrix side of the membrane; that stretch reads DRIKTQLQNNPGKSIVGTFGDIVSKGKG. A helical transmembrane segment spans residues 66–86; it reads FTGGVNALYEGILPMTAEAIF. The Mitochondrial intermembrane portion of the chain corresponds to 87–117; that stretch reads KVGIRYFAFSWFTEQYKTTVYKGETLNKKQQ. The chain crosses the membrane as a helical span at residues 118–138; it reads FGANLLGGAFAGTIESFVVVI. Residues 139–174 lie on the Mitochondrial matrix side of the membrane; it reads PCELLKVRHMTQEHNKSFGTVFRDVLREEGFQGLYK. A helical membrane pass occupies residues 175-191; that stretch reads GGSATLLRQITNHMIRF. At 192–212 the chain is on the mitochondrial intermembrane side; the sequence is PTFYAISDYLKGGDHSVHLPV. A helical transmembrane segment spans residues 213 to 229; that stretch reads WQNLSAGAIAGTASTLF. Residues 230–275 are Mitochondrial matrix-facing; it reads NNPLDTIKTRMQKQGQNQTTMQVVRGIYQETGVKGYWAGVIPRILR. A helical membrane pass occupies residues 276–296; the sequence is VAPGQAITWAVVELVMGILEP. The Mitochondrial intermembrane segment spans residues 297–301; it reads SSKKH.

The protein belongs to the mitochondrial carrier (TC 2.A.29) family.

The protein localises to the mitochondrion inner membrane. Functionally, mitochondrial solute carriers shuttle metabolites, nucleotides, and cofactors through the mitochondrial inner membrane. This chain is Mitochondrial substrate carrier family protein Z (mcfZ), found in Dictyostelium discoideum (Social amoeba).